Reading from the N-terminus, the 318-residue chain is MKHAENEYLNLCRHVMEHGTKKEDRTGTGTVSVFGYQMRFDLSKGFPLLTTKRVPFRLVASELLWFMKGDTNIRYLLQHNNNIWNEWAFKSWVESDEYTGPDMIDFGLRSQQDEEFKVQYDEQMELFKKNVLEDDEFSNKYGYLGDVYGKQWRAWKTTAGETLDQLKDVIEMIKKTPDSRRLIVSAWNPEDVPSMALPPCHTLFQFYVADGKLSCQLYQRSGDIFLGIPFNIASYSLLTHLIAHECGLEVGEFVHTIGDAHIYTNHFEQVEKQLAREPRPFPKLTLNPDVKSVFDFEMEDLTIEGYDPHPAIKAPVAV.

Residues R25 and R180–R181 contribute to the dUMP site. C200 functions as the Nucleophile in the catalytic mechanism. Residues R220–D223, N231, and H261–Y263 each bind dUMP. D223 contributes to the (6R)-5,10-methylene-5,6,7,8-tetrahydrofolate binding site. A317 contributes to the (6R)-5,10-methylene-5,6,7,8-tetrahydrofolate binding site.

Belongs to the thymidylate synthase family. Bacterial-type ThyA subfamily. As to quaternary structure, homodimer.

It is found in the cytoplasm. The catalysed reaction is dUMP + (6R)-5,10-methylene-5,6,7,8-tetrahydrofolate = 7,8-dihydrofolate + dTMP. It participates in pyrimidine metabolism; dTTP biosynthesis. Its function is as follows. Catalyzes the reductive methylation of 2'-deoxyuridine-5'-monophosphate (dUMP) to 2'-deoxythymidine-5'-monophosphate (dTMP) while utilizing 5,10-methylenetetrahydrofolate (mTHF) as the methyl donor and reductant in the reaction, yielding dihydrofolate (DHF) as a by-product. This enzymatic reaction provides an intracellular de novo source of dTMP, an essential precursor for DNA biosynthesis. This is Thymidylate synthase from Bacillus thuringiensis subsp. konkukian (strain 97-27).